Consider the following 713-residue polypeptide: Calpain-1 catalytic subunit (713 aa).

In terms of domain architecture, Calpain catalytic spans 55–354; the sequence is LFQDEAFPPV…FTKLEICNLT (300 aa). Ca(2+) contacts are provided by Gln109 and Asp114. Catalysis depends on residues Cys115, His272, and Asn296. Ca(2+) contacts are provided by Asp318 and Glu323. Position 354 is a phosphothreonine (Thr354). A domain III region spans residues 355 to 525; sequence PDALKSRTLR…KKAGTQELDD (171 aa). The interval 526-541 is linker; the sequence is QIQANLPDEKVLSEEE. EF-hand domains are found at residues 540-575, 584-617, 614-649, and 679-713; these read EEID…IISK, FSLE…NRIR, NRIR…AGFK, and VRLE…TMFA. A domain IV region spans residues 542-712; the sequence is IDDNFKTLFS…LFKWLQLTMF (171 aa). Residues Asp597, Asp599, Asn601, Lys603, Glu608, Asp627, Asp629, Ser631, Ser633, and Glu638 each contribute to the Ca(2+) site.

The protein belongs to the peptidase C2 family. As to quaternary structure, forms a heterodimer with a small (regulatory) subunit CAPNS1. Ca(2+) is required as a cofactor. Post-translationally, undergoes calcium-induced successive autoproteolytic cleavages that generate a membrane-bound 78 kDa active form and an intracellular 75 kDa active form. Calpastatin reduces with high efficiency the transition from 78 kDa to 75 kDa calpain forms.

Its subcellular location is the cytoplasm. The protein localises to the cell membrane. The enzyme catalyses Broad endopeptidase specificity.. Activated by micromolar concentrations of calcium and inhibited by calpastatin. Functionally, calcium-regulated non-lysosomal thiol-protease which catalyzes limited proteolysis of substrates involved in cytoskeletal remodeling and signal transduction. Proteolytically cleaves CTBP1 at 'Asn-375', 'Gly-388' and 'His-410'. Cleaves and activates caspase-7 (CASP7). This is Calpain-1 catalytic subunit from Mus musculus (Mouse).